A 228-amino-acid chain; its full sequence is MSTPVIKCLNVVKGYSEGPQKVEVLRGVNLQIEQGQHIAIVGASGSGKSTLLNVLGGLDKPDAGEVWVNEKAFSSLNDNKRGLVRNQELGFVYQFHHLLPEFTALENVMMPCLIAGVKKAQAKQKAEALLDKVGLSHRLDHKPAELSGGERQRVAIARALVNEPACVLMDEPTGNLDTENAESIQSLMKELSAQLQTSFIVVTHDLVLANTMNQVYRLEAGVLNKQGQ.

The ABC transporter domain occupies 6–228 (IKCLNVVKGY…EAGVLNKQGQ (223 aa)). 42–49 (GASGSGKS) lines the ATP pocket.

The protein belongs to the ABC transporter superfamily. Lipoprotein translocase (TC 3.A.1.125) family. As to quaternary structure, the complex is composed of two ATP-binding proteins (LolD) and two transmembrane proteins (LolC and LolE).

It is found in the cell inner membrane. Its function is as follows. Part of the ABC transporter complex LolCDE involved in the translocation of mature outer membrane-directed lipoproteins, from the inner membrane to the periplasmic chaperone, LolA. Responsible for the formation of the LolA-lipoprotein complex in an ATP-dependent manner. In Saccharophagus degradans (strain 2-40 / ATCC 43961 / DSM 17024), this protein is Lipoprotein-releasing system ATP-binding protein LolD.